Consider the following 596-residue polypeptide: Malto-oligosyltrehalose trehalohydrolase (596 aa).

Residue 263 to 268 (RLDAVH) coordinates substrate. Asp-265 serves as the catalytic Nucleophile. Glu-302 serves as the catalytic Proton donor. Residues 327 to 331 (DDFHH) and 397 to 402 (HDQIGN) each bind substrate.

This sequence belongs to the glycosyl hydrolase 13 family.

The protein resides in the cytoplasm. It carries out the reaction hydrolysis of (1-&gt;4)-alpha-D-glucosidic linkage in 4-alpha-D-[(1-&gt;4)-alpha-D-glucanosyl]n trehalose to yield trehalose and (1-&gt;4)-alpha-D-glucan.. Its pathway is glycan biosynthesis; trehalose biosynthesis. The polypeptide is Malto-oligosyltrehalose trehalohydrolase (treZ) (Rhizobium sp. (strain M-11)).